The sequence spans 1666 residues: Complement C3 (1666 aa).

Positions 1–22 (MGPAAGPSLLLLLLASVSLALG) are cleaved as a signal peptide. Phosphoserine is present on residues Ser70, Ser296, and Ser302. 13 cysteine pairs are disulfide-bonded: Cys557/Cys821, Cys630/Cys666, Cys698/Cys725, Cys699/Cys732, Cys712/Cys733, Cys878/Cys1517, Cys1106/Cys1163, Cys1363/Cys1493, Cys1394/Cys1462, Cys1510/Cys1515, Cys1522/Cys1593, Cys1540/Cys1664, and Cys1640/Cys1649. Ser676 bears the Phosphoserine mark. The Anaphylatoxin-like domain maps to 698–733 (CCEDGMRENPMQFSCQRRARYVSLGEACVKAFLDCC). An N-linked (GlcNAc...) asparagine glycan is attached at Asn944. Phosphoserine is present on Ser973. The segment at residues 1015 to 1018 (CGEQ) is a cross-link (isoglutamyl cysteine thioester (Cys-Gln)). Ser1326 is subject to Phosphoserine. Positions 1522–1664 (CFIQLPEKIT…FTENMVVFGC (143 aa)) constitute an NTR domain. At Ser1576 the chain carries Phosphoserine. Asn1620 carries an N-linked (GlcNAc...) asparagine glycan. The tract at residues 1637–1662 (AEECQDEENQQQCQDLGTFTENMVVF) is interaction with CFP/properdin.

In absence of complement activation, the C3 precursor is first processed by the removal of 4 Arg residues, forming two chains, beta and alpha, linked by a disulfide bond. In terms of assembly, complement C3b is composed of complement C3b and complement C3 beta chains that are associated via disulfide bonds. Non-enzymatic component of the C5 convertase, also named C4bC2bC3b, composed of the serine protease complement C2b (C2), complement C3b, as well as complement C4b (C4). Non-enzymatic component of the C5 convertase of the alternative complement pathways composed of the serine protease complement CFB and complement C3b. Interacts with CFP; interaction takes place together with CFB in the alternative complement system and allows the complex to become active. Interacts with CR1 (via Sushi 8 and Sushi 9 domains). Interacts with CFH. As to quaternary structure, interacts with CFH. Interacts with CR2. During pregnancy, C3dg exists as a complex (probably a 2:2:2 heterohexamer) with AGT and the proform of PRG2. Interacts with CR2 (via the N-terminal Sushi domains 1 and 2). C3 precursor is first processed by the removal of 4 Arg residues, forming two chains, beta and alpha, linked by a disulfide bond. During activation of the complement systems, the alpha chain is cleaved into C3a and C3b by the C3 convertase: C3b stays linked to the beta chain, while C3a is released in the plasma. The alpha chain is cleaved by the serine protease complement C2b component of the C3 convertase to generate C3a and C3b following activation by the classical, lectin and GZMK complement systems. The alpha chain is cleaved by CFB component of the C3 convertase to generate C3a and C3b following activation by the alternative complement system. In terms of processing, C3a is further processed by carboxypeptidases to release the C-terminal arginine residue generating the acylation stimulating protein (ASP). Levels of ASP are increased in adipocytes in the postprandial period and by insulin and dietary chylomicrons. Post-translationally, complement C3b is rapidly split in two positions by factor I (CFI) and a cofactor (CFH) to form iC3b (inactivated C3b) and C3f which is released. CFI and CFH catalyze proteolytic degradation of already-deposited complement C3b. Then iC3b is slowly cleaved (possibly by CFI) to form C3c (beta chain + alpha' chain fragment 1 + alpha' chain fragment 2), C3dg and C3f. Other proteases produce other fragments such as C3d or C3g. Upon activation, the internal thioester bond reacts with carbohydrate antigens on the target surface to form amide or ester bonds, leading to covalent association with the surface of pathogens. In terms of processing, complement C3b interacts with complement C4b via a thioester linkage. Post-translationally, phosphorylated by FAM20C in the extracellular medium.

The protein localises to the secreted. Its subcellular location is the cell surface. Its activity is regulated as follows. Complement activation is inhibited by VSIG4. Its function is as follows. Precursor of non-enzymatic components of the classical, alternative, lectin and GZMK complement pathways, which consist in a cascade of proteins that leads to phagocytosis and breakdown of pathogens and signaling that strengthens the adaptive immune system. In terms of biological role, non-enzymatic component of C5 convertase. Generated following cleavage by C3 convertase, it covalently attaches to the surface of pathogens, where it acts as an opsonin that marks the surface of antigens for removal. Complement C3b binds covalently via its reactive thioester, to cell surface carbohydrates or immune aggregates. Together with complement C4b, it then recruits the serine protease complement C2b to form the C5 convertase, which cleaves and activate C5, the next component of the complement pathways. In the alternative complement pathway, recruits the serine protease CFB to form the C5 convertase that cleaves and activates C5. Functionally, mediator of local inflammatory process released following cleavage by C3 convertase. Acts by binding to its receptor, C3AR1, activating G protein-coupled receptor signaling, promoting the phosphorylation, ARRB2-mediated internalization and endocytosis of C3AR1. C3a anaphylatoxin stimulates the activation of immune cells such as mast cells and basophilic leukocytes to release inflammation agents, such as cytokines, chemokines and histamine, which promote inflammation development. Also acts as potent chemoattractant for the migration of macrophages and neutrophils to the inflamed tissues, resulting in neutralization of the inflammatory triggers by multiple ways, such as phagocytosis and generation of reactive oxidants. Adipogenic hormone that stimulates triglyceride synthesis and glucose transport in adipocytes, regulating fat storage and playing a role in postprandial triglyceride clearance. Appears to stimulate triglyceride synthesis via activation of the PLC, MAPK and AKT signaling pathways. Acts by binding to its receptor, C5AR2, activating G protein-coupled receptor signaling, promoting the phosphorylation, ARRB2-mediated internalization and endocytosis of C5AR2. Its function is as follows. Acts as a chemoattractant for neutrophils in chronic inflammation. This is Complement C3 from Cavia porcellus (Guinea pig).